The primary structure comprises 124 residues: Small ribosomal subunit protein uS12 (124 aa).

Residue D89 is modified to 3-methylthioaspartic acid.

This sequence belongs to the universal ribosomal protein uS12 family. Part of the 30S ribosomal subunit. Contacts proteins S8 and S17. May interact with IF1 in the 30S initiation complex.

With S4 and S5 plays an important role in translational accuracy. In terms of biological role, interacts with and stabilizes bases of the 16S rRNA that are involved in tRNA selection in the A site and with the mRNA backbone. Located at the interface of the 30S and 50S subunits, it traverses the body of the 30S subunit contacting proteins on the other side and probably holding the rRNA structure together. The combined cluster of proteins S8, S12 and S17 appears to hold together the shoulder and platform of the 30S subunit. The sequence is that of Small ribosomal subunit protein uS12 from Shewanella putrefaciens (strain CN-32 / ATCC BAA-453).